Reading from the N-terminus, the 147-residue chain is MPGKKAPNGEFAGRKLKLKRKKFRWSDIRYKRRVLRLKEKSDPLEGAPQARGIVLEKIAVEAKQPNSGMRKAVRVQLIKNGKVVTAFCPGDGAINFIDEHDEVIIEGIGGPKGGSMGDIPGIRYKVVKVNRVSLKELVKGRKEKPRR.

It belongs to the universal ribosomal protein uS12 family. As to quaternary structure, part of the 30S ribosomal subunit.

Functionally, with S4 and S5 plays an important role in translational accuracy. Located at the interface of the 30S and 50S subunits. This is Small ribosomal subunit protein uS12 from Pyrococcus horikoshii (strain ATCC 700860 / DSM 12428 / JCM 9974 / NBRC 100139 / OT-3).